We begin with the raw amino-acid sequence, 290 residues long: Formamidopyrimidine-DNA glycosylase (290 aa).

The active-site Schiff-base intermediate with DNA is P2. E3 serves as the catalytic Proton donor. Catalysis depends on K58, which acts as the Proton donor; for beta-elimination activity. 3 residues coordinate DNA: H97, R122, and K165. An FPG-type; atypical zinc finger spans residues 250-290 (KVYGREGEPCPGCDCDPVRTGGIARIVQSGRSTFYCPRHQR). The Proton donor; for delta-elimination activity role is filled by R280.

Belongs to the FPG family. In terms of assembly, monomer. Requires Zn(2+) as cofactor.

The enzyme catalyses Hydrolysis of DNA containing ring-opened 7-methylguanine residues, releasing 2,6-diamino-4-hydroxy-5-(N-methyl)formamidopyrimidine.. The catalysed reaction is 2'-deoxyribonucleotide-(2'-deoxyribose 5'-phosphate)-2'-deoxyribonucleotide-DNA = a 3'-end 2'-deoxyribonucleotide-(2,3-dehydro-2,3-deoxyribose 5'-phosphate)-DNA + a 5'-end 5'-phospho-2'-deoxyribonucleoside-DNA + H(+). Involved in base excision repair of DNA damaged by oxidation or by mutagenic agents. Acts as a DNA glycosylase that recognizes and removes damaged bases. Has a preference for oxidized purines, such as 7,8-dihydro-8-oxoguanine (8-oxoG). Has AP (apurinic/apyrimidinic) lyase activity and introduces nicks in the DNA strand. Cleaves the DNA backbone by beta-delta elimination to generate a single-strand break at the site of the removed base with both 3'- and 5'-phosphates. This chain is Formamidopyrimidine-DNA glycosylase, found in Rhodospirillum centenum (strain ATCC 51521 / SW).